The chain runs to 177 residues: ATP synthase subunit b (177 aa).

The helical transmembrane segment at 29 to 49 threads the bilayer; it reads FFFVLAIFLIVLAVIGTFVVP.

This sequence belongs to the ATPase B chain family. In terms of assembly, F-type ATPases have 2 components, F(1) - the catalytic core - and F(0) - the membrane proton channel. F(1) has five subunits: alpha(3), beta(3), gamma(1), delta(1), epsilon(1). F(0) has three main subunits: a(1), b(2) and c(10-14). The alpha and beta chains form an alternating ring which encloses part of the gamma chain. F(1) is attached to F(0) by a central stalk formed by the gamma and epsilon chains, while a peripheral stalk is formed by the delta and b chains.

It localises to the cell membrane. Its function is as follows. F(1)F(0) ATP synthase produces ATP from ADP in the presence of a proton or sodium gradient. F-type ATPases consist of two structural domains, F(1) containing the extramembraneous catalytic core and F(0) containing the membrane proton channel, linked together by a central stalk and a peripheral stalk. During catalysis, ATP synthesis in the catalytic domain of F(1) is coupled via a rotary mechanism of the central stalk subunits to proton translocation. Component of the F(0) channel, it forms part of the peripheral stalk, linking F(1) to F(0). This Mycolicibacterium paratuberculosis (strain ATCC BAA-968 / K-10) (Mycobacterium paratuberculosis) protein is ATP synthase subunit b.